The chain runs to 203 residues: Fucoxanthin-chlorophyll a-c binding protein, chloroplastic (203 aa).

Residues 1-30 (MKLAIAALLAGSAAAFAPAQSGKASTALNM) constitute a chloroplast transit peptide.

Belongs to the fucoxanthin chlorophyll protein family. The LHC complex of chromophytic algae is composed of fucoxanthin, chlorophyll A and C bound non-covalently by fucoxanthin chlorophyll proteins (FCPs). The ratio of pigments in this LHC is; fucoxanthin: chlorophyll C: chlorophyll A; (0.6-1): (0.1-0.3): (1).

It localises to the plastid. Its subcellular location is the chloroplast thylakoid membrane. The light-harvesting complex (LHC) functions as a light receptor, it captures and delivers excitation energy to photosystems with which it is closely associated. Energy is transferred from the carotenoid and chlorophyll C (or B) to chlorophyll A and the photosynthetic reaction centers where it is used to synthesize ATP and reducing power. The chain is Fucoxanthin-chlorophyll a-c binding protein, chloroplastic (FCPA) from Trieres chinensis (Marine centric diatom).